The primary structure comprises 200 residues: Pyridoxal 5'-phosphate synthase subunit PdxT (200 aa).

L-glutamine is bound at residue Gly-52–Ser-54. The active-site Nucleophile is the Cys-84. L-glutamine contacts are provided by residues Arg-116 and Ile-145–Arg-146. Residues His-181 and Glu-183 each act as charge relay system in the active site.

This sequence belongs to the glutaminase PdxT/SNO family. In the presence of PdxS, forms a dodecamer of heterodimers. Only shows activity in the heterodimer.

The enzyme catalyses aldehydo-D-ribose 5-phosphate + D-glyceraldehyde 3-phosphate + L-glutamine = pyridoxal 5'-phosphate + L-glutamate + phosphate + 3 H2O + H(+). It catalyses the reaction L-glutamine + H2O = L-glutamate + NH4(+). Its pathway is cofactor biosynthesis; pyridoxal 5'-phosphate biosynthesis. Functionally, catalyzes the hydrolysis of glutamine to glutamate and ammonia as part of the biosynthesis of pyridoxal 5'-phosphate. The resulting ammonia molecule is channeled to the active site of PdxS. In Sulfolobus acidocaldarius (strain ATCC 33909 / DSM 639 / JCM 8929 / NBRC 15157 / NCIMB 11770), this protein is Pyridoxal 5'-phosphate synthase subunit PdxT.